The chain runs to 376 residues: Histidinol-phosphate aminotransferase 1 (376 aa).

K235 is subject to N6-(pyridoxal phosphate)lysine.

The protein belongs to the class-II pyridoxal-phosphate-dependent aminotransferase family. Histidinol-phosphate aminotransferase subfamily. Homodimer. Pyridoxal 5'-phosphate is required as a cofactor.

It carries out the reaction L-histidinol phosphate + 2-oxoglutarate = 3-(imidazol-4-yl)-2-oxopropyl phosphate + L-glutamate. It functions in the pathway amino-acid biosynthesis; L-histidine biosynthesis; L-histidine from 5-phospho-alpha-D-ribose 1-diphosphate: step 7/9. This Cupriavidus pinatubonensis (strain JMP 134 / LMG 1197) (Cupriavidus necator (strain JMP 134)) protein is Histidinol-phosphate aminotransferase 1.